The sequence spans 242 residues: EF-hand domain-containing protein D2 (242 aa).

A disordered region spans residues 1–53 (MATDELASKLSRRLQMEGEGGGEAPEQPGLNGAAAAAAAAGAPDETAEALGSA). A2 carries the N-acetylalanine modification. A Phosphoserine modification is found at S11. Positions 32-42 (GAAAAAAAAGA) are enriched in low complexity. Phosphoserine occurs at positions 76 and 78. The residue at position 85 (Y85) is a Phosphotyrosine. 2 consecutive EF-hand domains span residues 94–129 (KQIK…LGAP) and 130–165 (QTHL…AAAG). Ca(2+) contacts are provided by D107, D111, E118, D143, D145, D147, K149, and E154. K235 is subject to N6-acetyllysine.

As to quaternary structure, interacts with CASP9; with inactive form.

Its subcellular location is the membrane raft. Its function is as follows. May regulate B-cell receptor (BCR)-induced immature and primary B-cell apoptosis. Plays a role as negative regulator of the canonical NF-kappa-B-activating branch. Controls spontaneous apoptosis through the regulation of BCL2L1 abundance. The polypeptide is EF-hand domain-containing protein D2 (EFHD2) (Bos taurus (Bovine)).